Consider the following 493-residue polypeptide: Mitochondrial distribution and morphology protein 10 (493 aa).

The protein belongs to the MDM10 family. As to quaternary structure, component of the ER-mitochondria encounter structure (ERMES) or MDM complex, composed of MMM1, MDM10, MDM12 and MDM34. Associates with the mitochondrial outer membrane sorting assembly machinery SAM(core) complex, which consists of SAM35, SAM37 and SAM50, to form a SAM(holo) complex.

It localises to the mitochondrion outer membrane. In terms of biological role, component of the ERMES/MDM complex, which serves as a molecular tether to connect the endoplasmic reticulum and mitochondria. Components of this complex are involved in the control of mitochondrial shape and protein biogenesis and may function in phospholipid exchange. MDM10 is involved in the late assembly steps of the general translocase of the mitochondrial outer membrane (TOM complex). Functions in the TOM40-specific route of the assembly of outer membrane beta-barrel proteins, including the association of TOM40 with the receptor TOM22 and small TOM proteins. Can associate with the SAM(core) complex as well as the MDM12-MMM1 complex, both involved in late steps of the major beta-barrel assembly pathway, that is responsible for biogenesis of all outer membrane beta-barrel proteins. May act as a switch that shuttles between both complexes and channels precursor proteins into the TOM40-specific pathway. Plays a role in mitochondrial morphology and in the inheritance of mitochondria. In Saccharomyces cerevisiae (strain YJM789) (Baker's yeast), this protein is Mitochondrial distribution and morphology protein 10.